Consider the following 224-residue polypeptide: Dehydration-responsive element-binding protein 1G (224 aa).

Residues 1–16 (MDVSAALSSDYSSGTP) show a composition bias toward polar residues. The segment at 1–46 (MDVSAALSSDYSSGTPSPVAADADDGSSAYMTVSSAPPKRRAGRTK) is disordered. Positions 54-111 (VFKGVRRRNPGRWVCEVREPHGKQRIWLGTFETAEMAARAHDVAALALRGRAACLNFA) form a DNA-binding region, AP2/ERF.

The protein belongs to the AP2/ERF transcription factor family. ERF subfamily.

Its subcellular location is the nucleus. In terms of biological role, transcriptional activator that binds specifically to the DNA sequence 5'-[AG]CCGAC-3'. Binding to the C-repeat/DRE element mediates high salinity- and dehydration-inducible transcription. This is Dehydration-responsive element-binding protein 1G (DREB1G) from Oryza sativa subsp. indica (Rice).